The primary structure comprises 314 residues: Carbamate kinase (314 aa).

It belongs to the carbamate kinase family.

It is found in the cytoplasm. The enzyme catalyses hydrogencarbonate + NH4(+) + ATP = carbamoyl phosphate + ADP + H2O + H(+). Its pathway is metabolic intermediate metabolism; carbamoyl phosphate degradation; CO(2) and NH(3) from carbamoyl phosphate: step 1/1. The polypeptide is Carbamate kinase (arcC) (Latilactobacillus sakei (Lactobacillus sakei)).